We begin with the raw amino-acid sequence, 370 residues long: Lysophosphatidic acid receptor 4 (370 aa).

Residues M1 to G43 lie on the Extracellular side of the membrane. Residues N15, N24, and N28 are each glycosylated (N-linked (GlcNAc...) asparagine). The helical transmembrane segment at A44–F64 threads the bilayer. Residues C65 to E73 are Cytoplasmic-facing. Residues T74 to F94 traverse the membrane as a helical segment. The Extracellular segment spans residues K95–K112. An intrachain disulfide couples C111 to C188. The chain crosses the membrane as a helical span at residues I113–S133. Topologically, residues V134–S155 are cytoplasmic. Residues A156–F176 form a helical membrane-spanning segment. The Extracellular segment spans residues S177–K203. An N-linked (GlcNAc...) asparagine glycan is attached at N183. A helical membrane pass occupies residues I204 to S224. Topologically, residues S225–H254 are cytoplasmic. A helical membrane pass occupies residues M255–V275. The Extracellular portion of the chain corresponds to R276–P294. A helical transmembrane segment spans residues I295–L315. Residues E316–F370 lie on the Cytoplasmic side of the membrane.

This sequence belongs to the G-protein coupled receptor 1 family. In terms of tissue distribution, high expression in ovary. Not detected in the brain regions thalamus, putamen, caudate, frontal cortex, pons, hypothalamus and hippocampus.

The protein resides in the cell membrane. Its function is as follows. Receptor for lysophosphatidic acid (LPA), a mediator of diverse cellular activities. Transduces a signal by increasing the intracellular calcium ions and by stimulating adenylyl cyclase activity. The rank order of potency for agonists of this receptor is 1-oleoyl- &gt; 1-stearoyl- &gt; 1-palmitoyl- &gt; 1-myristoyl- &gt; 1-alkyl- &gt; 1-alkenyl-LPA. The sequence is that of Lysophosphatidic acid receptor 4 (LPAR4) from Homo sapiens (Human).